We begin with the raw amino-acid sequence, 208 residues long: MSAQKRVFLKVVILGDSGVGKTCLMNQFVNQKFSREYKATIGADFLTKDVVVDDKLVTLQLWDTAGQERFQSLGMAFYRGADCCVIVYNVNNSKSFDSVENWRQEFLYQTSQDECAFPFIIVGNQIDKDASKRAVSLHRALDYCKSKHGSNMIHFEASAKENTNVTDLFETVSRLALENESSRDDFVNDFSEPLLLSKPLNNTSSCNC.

Residues 17 to 23 (SGVGKTC), 33 to 40 (FSREYKAT), glycine 66, 124 to 127 (NQID), and 158 to 160 (SAK) contribute to the GTP site. Positions 37-45 (YKATIGADF) match the Effector region motif. S-geranylgeranyl cysteine attachment occurs at residues cysteine 206 and cysteine 208. Cysteine 208 is modified (cysteine methyl ester).

It belongs to the small GTPase superfamily. Rab family.

It is found in the vacuole membrane. With respect to regulation, rab activation is generally mediated by a guanine exchange factor (GEF), while inactivation through hydrolysis of bound GTP is catalyzed by a GTPase activating protein (GAP). Functionally, ypt/Rab-type GTPases are key regulators of membrane trafficking and intracellular vesicular transport. They act as molecular switches that convert between GTP-bound and GDP-bound states, and regulate virtually all steps of membrane traffic from the formation of the transport vesicle at the donor membrane to its fusion at the target membrane. In the GDP-bound state, Ypt proteins are predominantly cytosolic, solubilized through the interaction with a GDP dissociation inhibitor (GDI). In the GTP-bound state, the proteins are membrane bound and interact with specific effector proteins that select cargo, promote vesicle movement, or verify the correct site of fusion. Act antagonistically to ypt7 in regulating vacuolar morphology, promoting vacuolar fission. In Schizosaccharomyces pombe (strain 972 / ATCC 24843) (Fission yeast), this protein is Ypt/Rab-type GTPase ypt71 (ypt71).